The chain runs to 575 residues: Cytochrome P450 monooxygenase opaB (575 aa).

N6 carries N-linked (GlcNAc...) asparagine glycosylation. The chain crosses the membrane as a helical span at residues 37-57; that stretch reads FILAAILASIILLIIRNSMLS. N83 and N242 each carry an N-linked (GlcNAc...) asparagine glycan. Heme is bound at residue C521.

The protein belongs to the cytochrome P450 family. Heme serves as cofactor.

It is found in the membrane. The protein operates within secondary metabolite biosynthesis. Functionally, cytochrome P450 monooxygenase; part of the gene cluster that mediates the biosynthesis of oxepinamides, derivatives of anthranilyl-containing tripeptides that share an oxepin ring and a fused pyrimidinone moiety. The nonribosomal peptide synthetase (NRPS) opaA assembles the quinazolinone core with D-Phe incorporation. The first adenylation domain (A1) of opaA loads and activates anthranilic acid whereas the second A domain (A2) is for activating of L-Phe, which is then converted to D-form by the E domain. The third A domain (A3) is responsible for L-Ile activation and the terminal condensation domain C3 for cyclization and releasing the NRPS product protuboxepin K. The cytochrome P450 monooxygenase opaB then catalyzes alone the oxepin ring formation to convert protuboxepin K into protuboxepin A. The flavoenzyme opaC installs subsequently one hydroxyl group at the oxepin ring, accompanied by double bond migration, to form 15-epi-oxepinamide E. The epimerase opaE changes the D-Phe residue back to L-form, leading to oxepinamide E, which is further methylated at the hydroxyl group at C-12 by the O-methyltransferase OpaF to yield oxepinamide F. This chain is Cytochrome P450 monooxygenase opaB, found in Aspergillus ustus.